We begin with the raw amino-acid sequence, 214 residues long: Large ribosomal subunit protein uL4 (214 aa).

The disordered stretch occupies residues 56–86 (THKVKNRAEVSGTGKKPWKQKSTGKARAGSK). Basic residues predominate over residues 71–85 (KPWKQKSTGKARAGS).

This sequence belongs to the universal ribosomal protein uL4 family. As to quaternary structure, part of the 50S ribosomal subunit.

Functionally, one of the primary rRNA binding proteins, this protein initially binds near the 5'-end of the 23S rRNA. It is important during the early stages of 50S assembly. It makes multiple contacts with different domains of the 23S rRNA in the assembled 50S subunit and ribosome. Its function is as follows. Forms part of the polypeptide exit tunnel. In Mesomycoplasma hyopneumoniae (strain 232) (Mycoplasma hyopneumoniae), this protein is Large ribosomal subunit protein uL4.